The chain runs to 470 residues: Glutamate--tRNA ligase (470 aa).

Positions 9 to 19 (PSPTGFLHVGG) match the 'HIGH' region motif. The 'KMSKS' region signature appears at 236–240 (RLSKR). Lys239 serves as a coordination point for ATP.

It belongs to the class-I aminoacyl-tRNA synthetase family. Glutamate--tRNA ligase type 1 subfamily. As to quaternary structure, monomer.

It localises to the cytoplasm. It carries out the reaction tRNA(Glu) + L-glutamate + ATP = L-glutamyl-tRNA(Glu) + AMP + diphosphate. Catalyzes the attachment of glutamate to tRNA(Glu) in a two-step reaction: glutamate is first activated by ATP to form Glu-AMP and then transferred to the acceptor end of tRNA(Glu). The polypeptide is Glutamate--tRNA ligase (Legionella pneumophila (strain Corby)).